Here is a 328-residue protein sequence, read N- to C-terminus: Cell division protein ZipA (328 aa).

Topologically, residues 1 to 4 (MDLN) are periplasmic. The helical transmembrane segment at 5-25 (TILIIVGIVALVALIVHGLWS) threads the bilayer. Topologically, residues 26–328 (NRREKSKYFD…NAEQAYLARV (303 aa)) are cytoplasmic. Positions 44–82 (SLTSRSHTQEEMVQPNNISPNTYVENGHTPIPQPTTEKL) are disordered. Positions 57–67 (QPNNISPNTYV) are enriched in polar residues.

Belongs to the ZipA family. Interacts with FtsZ via their C-terminal domains.

Its subcellular location is the cell inner membrane. Its function is as follows. Essential cell division protein that stabilizes the FtsZ protofilaments by cross-linking them and that serves as a cytoplasmic membrane anchor for the Z ring. Also required for the recruitment to the septal ring of downstream cell division proteins. This chain is Cell division protein ZipA, found in Haemophilus influenzae (strain ATCC 51907 / DSM 11121 / KW20 / Rd).